The chain runs to 153 residues: Ubiquitin-conjugating enzyme E2 ubc-18 (153 aa).

Residues 2–149 (SATRRLQKEL…AEEHTRKHAE (148 aa)) form the UBC core domain. Residue C86 is the Glycyl thioester intermediate of the active site.

The protein belongs to the ubiquitin-conjugating enzyme family. In terms of assembly, interacts with E3 ubiquitin-protein ligase wwp-1. Interacts with RBR-type E3 ubiquitin transferase ari-1.1. As to expression, expressed in neurons localized in the head and tail of adults.

The catalysed reaction is S-ubiquitinyl-[E1 ubiquitin-activating enzyme]-L-cysteine + [E2 ubiquitin-conjugating enzyme]-L-cysteine = [E1 ubiquitin-activating enzyme]-L-cysteine + S-ubiquitinyl-[E2 ubiquitin-conjugating enzyme]-L-cysteine.. Functionally, ubiquitin-conjugating enzyme E2. Accepts ubiquitin from the E1 complex and catalyzes its covalent attachment to other proteins. Required for diet restriction-mediated lifespan extension, probably acting as part of a complex with ubiquitin-protein ligase wwp-1. Acts redundantly with lin-35/Rb in the regulation of pharyngeal morphogenesis during embryonic development by negatively regulating the expression of proteins such as sup-35. In Caenorhabditis elegans, this protein is Ubiquitin-conjugating enzyme E2 ubc-18.